Consider the following 417-residue polypeptide: Carboxypeptidase A2 (417 aa).

The first 16 residues, 1 to 16, serve as a signal peptide directing secretion; it reads MRLTLLLAALLGYIYC. Residues 17–112 constitute a propeptide, activation peptide; that stretch reads QETFVGDQVL…EMLFNQQRER (96 aa). A Peptidase M14 domain is found at 120–412; that stretch reads AYHTLEEIYQ…LGLKTIMEHV (293 aa). 2 residues coordinate Zn(2+): His177 and Glu180. Substrate contacts are provided by residues 177 to 180, Arg235, and 252 to 253; these read HARE and NR. Cys246 and Cys269 are joined by a disulfide. His304 provides a ligand contact to Zn(2+). Residue 305–306 coordinates substrate; the sequence is SY. The cysteines at positions 318 and 352 are disulfide-linked. Tyr356 is a binding site for substrate. Glu378 acts as the Proton donor/acceptor in catalysis.

This sequence belongs to the peptidase M14 family. It depends on Zn(2+) as a cofactor.

The protein resides in the secreted. It catalyses the reaction Similar to that of carboxypeptidase A (EC 3.4.17.1), but with a preference for bulkier C-terminal residues.. In terms of biological role, carboxypeptidase that catalyzes the release of a C-terminal amino acid, with a preference for large aromatic C-terminal residues. This chain is Carboxypeptidase A2 (Cpa2), found in Rattus norvegicus (Rat).